A 631-amino-acid chain; its full sequence is 1-deoxy-D-xylulose-5-phosphate synthase (631 aa).

Residues histidine 73 and 114–116 (GHS) each bind thiamine diphosphate. Aspartate 145 contributes to the Mg(2+) binding site. Thiamine diphosphate is bound by residues 146–147 (GA), asparagine 174, tyrosine 285, and glutamate 366. Mg(2+) is bound at residue asparagine 174.

This sequence belongs to the transketolase family. DXPS subfamily. Homodimer. Mg(2+) is required as a cofactor. Thiamine diphosphate serves as cofactor.

The enzyme catalyses D-glyceraldehyde 3-phosphate + pyruvate + H(+) = 1-deoxy-D-xylulose 5-phosphate + CO2. It functions in the pathway metabolic intermediate biosynthesis; 1-deoxy-D-xylulose 5-phosphate biosynthesis; 1-deoxy-D-xylulose 5-phosphate from D-glyceraldehyde 3-phosphate and pyruvate: step 1/1. Its function is as follows. Catalyzes the acyloin condensation reaction between C atoms 2 and 3 of pyruvate and glyceraldehyde 3-phosphate to yield 1-deoxy-D-xylulose-5-phosphate (DXP). The sequence is that of 1-deoxy-D-xylulose-5-phosphate synthase from Desulfitobacterium hafniense (strain DSM 10664 / DCB-2).